A 260-amino-acid polypeptide reads, in one-letter code: Thrombin-like enzyme 1 (260 aa).

An N-terminal signal peptide occupies residues 1–18 (MVLITVLANLLILQLSYA). A propeptide spanning residues 19–24 (QKSSEL) is cleaved from the precursor. The 227-residue stretch at 25–251 (VIGGDECNIN…HLDWIQSIIA (227 aa)) folds into the Peptidase S1 domain. 6 cysteine pairs are disulfide-bonded: C31–C165, C52–C68, C102–C258, C144–C212, C176–C191, and C202–C227. H67 (charge relay system) is an active-site residue. N105 is a glycosylation site (N-linked (GlcNAc...) asparagine). D112 (charge relay system) is an active-site residue. N-linked (GlcNAc...) asparagine glycans are attached at residues N156 and N172. S206 serves as the catalytic Charge relay system. N-linked (GlcNAc...) asparagine glycosylation is present at N253.

The protein belongs to the peptidase S1 family. Snake venom subfamily. Monomer. As to expression, expressed by the venom gland.

The protein localises to the secreted. Thrombin-like snake venom serine protease. In Trimeresurus albolabris (White-lipped pit viper), this protein is Thrombin-like enzyme 1.